The primary structure comprises 594 residues: Pentatricopeptide repeat-containing protein At1g15480, mitochondrial (594 aa).

Residues 1-67 (MFALSKVLRR…WSSSTGRRSL (67 aa)) constitute a mitochondrion transit peptide. Low complexity predominate over residues 62-75 (TGRRSLSSDAGAKT). The tract at residues 62–109 (TGRRSLSSDAGAKTTGDDDDLEDKNVDLATPDETSSDSEDGEEFSGDE) is disordered. Positions 95 to 109 (TSSDSEDGEEFSGDE) are enriched in acidic residues. PPR repeat units follow at residues 226-260 (GELVYRTLLANHVATSNVRTAEAVFNKMKDLGFPL), 261-294 (STFTCNQMLILYKRVDKKKIADVLLLLEKENLKP), 295-329 (NLNTYKILIDTKGSSNDITGMEQIVETMKSEGVEL), 330-364 (DLRARALIARHYASAGLKEKAEKVLKEMEGESLEE), 432-466 (SSNVYSVLLRVYVDHKMVSEGKDLVKQMSDSGCNI), 467-502 (GALTWDAVIKLYVEAGEVEKAESSLSKAIQSKQIKP), and 503-537 (LMSSFMYLMHEYVRRGDVHNTEKIFQRMKQAGYQS).

The protein belongs to the PPR family. P subfamily.

The protein resides in the mitochondrion. The sequence is that of Pentatricopeptide repeat-containing protein At1g15480, mitochondrial from Arabidopsis thaliana (Mouse-ear cress).